Reading from the N-terminus, the 4655-residue chain is Low-density lipoprotein receptor-related protein 2 (4655 aa).

The N-terminal stretch at 1 to 25 (MDRGPAAVACTLLLALVACLAPASG) is a signal peptide. Topologically, residues 26 to 4423 (QECDSAHFRC…FSKGISPGTT (4398 aa)) are extracellular. 7 LDL-receptor class A domains span residues 27–63 (ECDSAHFRCGSGHCIPADWRCDGTKDCSDDADEIGCA), 66–104 (TCQQGYFKCQSEGQCIPNSWVCDQDQDCDDGSDERQDCS), 107–143 (TCSSHQITCSNGQCIPSEYRCDHVRDCPDGADENDCQ), 146–180 (TCEQLTCDNGACYNTSQKCDWKVDCRDSSDEINCT), 182–218 (ICLHNEFSCGNGECIPRAYVCDHDNDCQDGSDEHACN), 221–257 (TCGGYQFTCPSGRCIYQNWVCDGEDDCKDNGDEDGCE), and 265–308 (KCSP…KYCS). Disulfide bonds link cysteine 28/cysteine 40, cysteine 35/cysteine 53, cysteine 47/cysteine 62, cysteine 67/cysteine 80, cysteine 74/cysteine 93, cysteine 87/cysteine 103, cysteine 108/cysteine 120, cysteine 115/cysteine 133, cysteine 127/cysteine 142, cysteine 147/cysteine 157, cysteine 152/cysteine 170, cysteine 164/cysteine 179, cysteine 183/cysteine 195, cysteine 190/cysteine 208, cysteine 202/cysteine 217, cysteine 222/cysteine 234, cysteine 229/cysteine 247, cysteine 241/cysteine 256, cysteine 266/cysteine 279, cysteine 273/cysteine 292, and cysteine 286/cysteine 307. N-linked (GlcNAc...) asparagine glycans are attached at residues asparagine 159 and asparagine 178. Asparagine 299, asparagine 300, asparagine 341, asparagine 388, and asparagine 463 each carry an N-linked (GlcNAc...) asparagine glycan. LDL-receptor class B repeat units lie at residues 436 to 478 (QRVF…DWVN), 479 to 521 (NKIY…DPTV), 522 to 568 (GYLF…DMIS), 569 to 613 (KRVY…FEGQ), 753 to 795 (STIF…DWIS), 796 to 837 (KNLY…HPFA), 838 to 881 (GYLF…DWAA), and 882 to 925 (SRLY…FGEH). A glycan (N-linked (GlcNAc...) asparagine) is linked at asparagine 866. Residues 1025 to 1061 (QCGLFSFPCKNGRCVPNYYLCDGVDDCHDNSDEQLCG) form the LDL-receptor class A 8 domain. Cystine bridges form between cysteine 1026–cysteine 1038, cysteine 1033–cysteine 1051, and cysteine 1045–cysteine 1060. An N-linked (GlcNAc...) asparagine glycan is attached at asparagine 1064. LDL-receptor class A domains follow at residues 1066–1102 (TCSSSAFTCGHGECIPAHWRCDKRNDCVDGSDEHNCP), 1108–1144 (SCLDTQYTCDNHQCISKNWVCDTDNDCGDGSDEKNCN), 1148–1184 (TCQPSQFNCPNHRCIDLSFVCDGDKDCVDGSDEVGCV), 1186–1223 (NCTASQFKCASGDKCIGVTNRCDGVFDCSDNSDEAGCP), 1229–1267 (MCHSDEFQCQEDGICIPNFWECDGHPDCLYGSDEHNACV), 1270–1306 (TCPSSYFHCDNGNCIHRAWLCDRDNDCGDMSDEKDCP), and 1304–1349 (DCPT…PLCN). 6 disulfide bridges follow: cysteine 1067/cysteine 1079, cysteine 1074/cysteine 1092, cysteine 1086/cysteine 1101, cysteine 1109/cysteine 1121, cysteine 1116/cysteine 1134, and cysteine 1128/cysteine 1143. 6 residues coordinate Ca(2+): tryptophan 1126, aspartate 1129, aspartate 1131, aspartate 1133, aspartate 1139, and glutamate 1140. A glycan (N-linked (GlcNAc...) asparagine) is linked at asparagine 1144. Disulfide bonds link cysteine 1149-cysteine 1161, cysteine 1156-cysteine 1174, and cysteine 1168-cysteine 1183. The N-linked (GlcNAc...) asparagine glycan is linked to asparagine 1186. Disulfide bonds link cysteine 1187/cysteine 1200, cysteine 1194/cysteine 1213, cysteine 1207/cysteine 1222, cysteine 1230/cysteine 1243, cysteine 1237/cysteine 1256, cysteine 1250/cysteine 1266, cysteine 1271/cysteine 1283, cysteine 1278/cysteine 1296, cysteine 1290/cysteine 1305, cysteine 1305/cysteine 1325, cysteine 1312/cysteine 1338, and cysteine 1332/cysteine 1348. Ca(2+)-binding residues include aspartate 1208, valine 1210, aspartate 1212, aspartate 1218, and glutamate 1219. 3 N-linked (GlcNAc...) asparagine glycosylation sites follow: asparagine 1327, asparagine 1340, and asparagine 1383. The EGF-like 1; calcium-binding domain maps to 1390–1429 (DIDECDILGSCSQHCYNMRGSFRCSCDTGYMLESDGRTCK). Cystine bridges form between cysteine 1394/cysteine 1404, cysteine 1400/cysteine 1413, and cysteine 1415/cysteine 1428. Asparagine 1464, asparagine 1496, and asparagine 1550 each carry an N-linked (GlcNAc...) asparagine glycan. LDL-receptor class B repeat units lie at residues 1478 to 1520 (GRIF…DWVG), 1521 to 1563 (RNLY…DPRM), 1566 to 1609 (HLLF…DYPN), 1610 to 1654 (RLLY…FEDS), and 1655 to 1695 (VYWT…VHPS). Asparagine 1675 carries an N-linked (GlcNAc...) asparagine glycan. The 42-residue stretch at 1700–1741 (SVNPCAFSRCSHLCLLSSQGPHFYSCVCPSGWSLSPDLLNCL) folds into the EGF-like 2 domain. 3 disulfide bridges follow: cysteine 1704-cysteine 1713, cysteine 1709-cysteine 1725, and cysteine 1727-cysteine 1740. LDL-receptor class B repeat units lie at residues 1790-1832 (QYIY…DWIS), 1833-1882 (RNLY…DPAR), 1883-1930 (GKLY…DIEE), 1931-1972 (QKLY…HDSF), and 1973-2013 (LYYT…YHRR). A glycan (N-linked (GlcNAc...) asparagine) is linked at asparagine 1810. Asparagine 2055 carries N-linked (GlcNAc...) asparagine glycosylation. LDL-receptor class B repeat units lie at residues 2107-2156 (GFIY…DWVA), 2157-2201 (GNLY…DPKN), 2202-2245 (RYLF…DRSD), 2246-2289 (GYVY…FENS), 2431-2477 (DRIY…DWIT), 2478-2518 (RRIY…DPCQ), 2519-2562 (GYLY…DYEE), 2563-2604 (DLLY…YGQY), and 2605-2646 (IYWT…VVKN). N-linked (GlcNAc...) asparagine glycosylation is found at asparagine 2177 and asparagine 2224. 2 N-linked (GlcNAc...) asparagine glycosylation sites follow: asparagine 2499 and asparagine 2547. 10 LDL-receptor class A domains span residues 2699–2737 (RCGASSFTCSNGRCISEEWKCDNDNDCGDGSDEMESVCA), 2740–2776 (TCSPTAFTCANGRCVQYSYRCDYYNDCGDGSDEAGCL), 2779–2818 (DCNATTEFMCNNRRCIPREFICNGVDNCHDNNTSDEKNCP), 2821–2860 (TCQSGYTKCHNSNICIPRVYLCDGDNDCGDNSDENPTYCT), 2863–2900 (TCSSSEFQCASGRCIPQHWYCDQETDCFDASDEPASCG), 2905–2944 (TCLADEFKCDGGRCIPSEWICDGDNDCGDMSDEDKRHQCQ), 2947–2989 (NCSD…QNCT), 2992–3028 (TCSENEFTCGYGLCIPKIFRCDRHNDCGDYSDERGCL), 3031–3069 (TCQQNQFTCQNGRCISKTFVCDEDNDCGDGSDELMHLCH), and 3074–3110 (TCPPHEFKCDNGRCIEMMKLCNHLDDCLDNSDEKGCG). 18 disulfides stabilise this stretch: cysteine 2700–cysteine 2712, cysteine 2707–cysteine 2725, cysteine 2719–cysteine 2736, cysteine 2741–cysteine 2753, cysteine 2748–cysteine 2766, cysteine 2760–cysteine 2775, cysteine 2780–cysteine 2793, cysteine 2788–cysteine 2806, cysteine 2800–cysteine 2817, cysteine 2822–cysteine 2835, cysteine 2829–cysteine 2848, cysteine 2842–cysteine 2859, cysteine 2864–cysteine 2876, cysteine 2871–cysteine 2889, cysteine 2883–cysteine 2899, cysteine 2906–cysteine 2918, cysteine 2913–cysteine 2931, and cysteine 2925–cysteine 2943. Asparagine 2781 carries N-linked (GlcNAc...) asparagine glycosylation. N-linked (GlcNAc...) asparagine glycosylation is found at asparagine 2809 and asparagine 2810. Asparagine 2947 carries an N-linked (GlcNAc...) asparagine glycan. Cystine bridges form between cysteine 2948–cysteine 2965, cysteine 2955–cysteine 2978, cysteine 2972–cysteine 2988, cysteine 2993–cysteine 3005, cysteine 3000–cysteine 3018, cysteine 3012–cysteine 3027, cysteine 3032–cysteine 3044, cysteine 3039–cysteine 3057, cysteine 3051–cysteine 3068, cysteine 3075–cysteine 3087, cysteine 3082–cysteine 3100, cysteine 3094–cysteine 3109, cysteine 3114–cysteine 3126, cysteine 3122–cysteine 3135, cysteine 3137–cysteine 3150, cysteine 3156–cysteine 3167, cysteine 3163–cysteine 3176, and cysteine 3178–cysteine 3191. Asparagine 2987 carries an N-linked (GlcNAc...) asparagine glycan. Positions 3110–3151 (GINECHDPSISGCDHNCTDTLTSFYCSCRPGYKLMSDKRTCV) constitute an EGF-like 3 domain. An N-linked (GlcNAc...) asparagine glycan is attached at asparagine 3125. Positions 3152-3192 (DIDECTEMPFVCSQKCENVIGSYICKCAPGYLREPDGKTCR) constitute an EGF-like 4; calcium-binding domain. Residues asparagine 3211, asparagine 3257, asparagine 3315, and asparagine 3355 are each glycosylated (N-linked (GlcNAc...) asparagine). 5 LDL-receptor class B repeats span residues 3239–3281 (KRLY…DWVS), 3282–3324 (RKLY…DNPR), 3333–3376 (GYLY…DYTN), 3377–3419 (DLLY…FEDT), and 3420–3460 (IYWT…YHPY). Asparagine 3446 carries N-linked (GlcNAc...) asparagine glycosylation. 11 consecutive LDL-receptor class A domains span residues 3511-3549 (MCSSTQFLCANNEKCIPIWWKCDGQKDCSDGSDELALCP), 3552-3590 (FCRLGQFQCSDGNCTSPQTLCNAHQNCPDGSDEDRLLCE), 3593-3631 (HCDSNEWQCANKRCIPESWQCDTFNDCEDNSDEDSSHCA), 3634-3672 (TCRPGQFRCANGRCIPQAWKCDVDNDCGDHSDEPIEECM), 3677-3715 (LCDNFTEFSCKTNYRCIPKWAVCNGVDDCRDNSDEQGCE), 3718-3755 (TCHPVGDFRCKNHHCIPLRWQCDGQNDCGDNSDEENCA), 3758-3794 (ECTESEFRCVNQQCIPSRWICDHYNDCGDNSDERDCE), 3797-3833 (TCHPEYFQCTSGHCVHSELKCDGSADCLDASDEADCP), 3841-3879 (YCQATMFECKNHVCIPPYWKCDGDDDCGDGSDEELHLCL), 3882-3921 (PCNSPNRFRCDNNRCIYSHEVCNGVDDCGDGTDETEEHCR), and 3927-3963 (PCTEYEYKCGNGHCIPHDNVCDDADDCGDWSDELGCN). Intrachain disulfides connect cysteine 3512–cysteine 3525, cysteine 3519–cysteine 3538, cysteine 3532–cysteine 3548, cysteine 3553–cysteine 3565, cysteine 3560–cysteine 3578, cysteine 3572–cysteine 3589, cysteine 3594–cysteine 3606, cysteine 3601–cysteine 3619, cysteine 3613–cysteine 3630, cysteine 3635–cysteine 3647, cysteine 3642–cysteine 3660, cysteine 3654–cysteine 3671, cysteine 3678–cysteine 3692, cysteine 3686–cysteine 3705, cysteine 3699–cysteine 3714, cysteine 3719–cysteine 3732, cysteine 3727–cysteine 3745, cysteine 3739–cysteine 3754, cysteine 3759–cysteine 3771, cysteine 3766–cysteine 3784, cysteine 3778–cysteine 3793, cysteine 3798–cysteine 3810, cysteine 3805–cysteine 3823, cysteine 3817–cysteine 3832, cysteine 3842–cysteine 3854, cysteine 3849–cysteine 3867, cysteine 3861–cysteine 3878, cysteine 3883–cysteine 3896, cysteine 3891–cysteine 3909, cysteine 3903–cysteine 3920, cysteine 3928–cysteine 3940, cysteine 3935–cysteine 3953, and cysteine 3947–cysteine 3962. N-linked (GlcNAc...) asparagine glycosylation is present at asparagine 3564. Asparagine 3680 carries N-linked (GlcNAc...) asparagine glycosylation. The N-linked (GlcNAc...) asparagine glycan is linked to asparagine 3978. In terms of domain architecture, EGF-like 5; calcium-binding spans 4007-4048 (DINECEQFGTCPQHCRNTKGSYECVCADGFTSMSDRPGKRCA). 3 disulfide bridges follow: cysteine 4011–cysteine 4021, cysteine 4017–cysteine 4030, and cysteine 4032–cysteine 4047. A glycan (N-linked (GlcNAc...) asparagine) is linked at asparagine 4068. LDL-receptor class B repeat units follow at residues 4154–4196 (RHIY…NPKL), 4197–4240 (GLMF…DYLN), and 4242–4283 (DRIY…FEDQ). A glycan (N-linked (GlcNAc...) asparagine) is linked at asparagine 4327. The EGF-like 6 domain occupies 4377–4411 (LPPPCRCMHGGNCYFDETDLPKCKCPSGYTGKYCE). Intrachain disulfides connect cysteine 4381–cysteine 4389, cysteine 4383–cysteine 4399, and cysteine 4401–cysteine 4410. The chain crosses the membrane as a helical span at residues 4424–4446 (AVAVLLTILLIVVIGALAIAGFF). The Cytoplasmic portion of the chain corresponds to 4447-4655 (HYRRTGSLLP…ANLVKEDSEV (209 aa)). Residues 4453-4462 (SLLPALPKLP) carry the SH3-binding motif. The PxLPxI/L motif 1; mediates interaction with ANKRA2 motif lies at 4456-4461 (PALPKL). Residues 4459–4464 (PKLPSL) carry the PxLPxI/L motif 2; mediates interaction with ANKRA2 motif. 2 positions are modified to phosphoserine: serine 4463 and serine 4466. An Endocytosis signal motif is present at residues 4521-4526 (FENPMY). The disordered stretch occupies residues 4550–4574 (KNYGSPINPSEIVPETNPTSPAADG). Positions 4565 to 4574 (TNPTSPAADG) are enriched in polar residues. Serine 4569 is modified (phosphoserine). Residues 4589–4602 (QTTNFENPIYAQME) are interaction with DAB2. Positions 4595 to 4598 (NPIY) match the NPXY motif motif. The SH2-binding motif lies at 4598-4601 (YAQM). Residues 4601–4655 (MENEQKESVAATPPPSPSLPAKPKPPSRRDPTPTYSATEDTFKDTANLVKEDSEV) are disordered. Residues 4611-4622 (ATPPPSPSLPAK) carry the SH3-binding motif. Residues 4612–4624 (TPPPSPSLPAKPK) show a composition bias toward pro residues. A Phosphoserine modification is found at serine 4616. Threonine 4632 is modified (phosphothreonine). Position 4653 is a phosphoserine (serine 4653).

The protein belongs to the LDLR family. As to quaternary structure, binds plasminogen, extracellular matrix components, plasminogen activator-plasminogen activator inhibitor type I complex, apolipoprotein E-enriched beta-VLDL, lipoprotein lipase, lactoferrin, CLU/clusterin and calcium. Forms a multimeric complex together with LRPAP1. Interacts (via PxLPxI/L motif) with ANKRA2 (via ankyrin repeats). Interacts with LRP2BP. Interacts (via NPXY motif) with DAB2; the interaction is not affected by tyrosine phosphorylation of the NPXY motif. Interacts with MB. Interacts with BMP4. Interacts with the Sonic hedgehog protein N-product which is the active product of SHH. Interacts with CST3 in a calcium-dependent manner. Interacts with the vitamin-D binding protein GC/DBP. Interacts with sex hormone-binding protein SHBG. Interacts with angiotensin-2. Also interacts with angiotensin 1-7. Interacts with APOM. Interacts with selenoprotein SEPP1. Interacts with LEP. Interacts with ALB. Interacts with the antiapoptotic protein BIRC5/survivin. Interacts with matrix metalloproteinase MMP2 in complex with metalloproteinase inhibitor TIMP1. In neurons, forms a trimeric complex with APP and APPB1/FE65. Interacts with LDLRAP1/ARH; mediates trafficking of LRP2 to the endocytic recycling compartment. Does not interact with beta-amyloid protein 40 alone but interacts with the complex composed of beta-amyloid protein 40 and CLU/APOJ. Interacts with MDK. In terms of processing, a fraction undergoes proteolytic cleavage of the extracellular domain at the cell membrane to generate a cytoplasmic tail fragment. This is internalized into the early endosome from where it trafficks in an LDLRAP1/ARH-dependent manner to the endocytic recycling compartment (ERC). In the ERC, it is further cleaved by gamma-secretase to release a fragment which translocates to the nucleus and mediates transcriptional repression. N-glycosylation is required for ligand binding. As to expression, expressed in first and third trimester cytotrophoblasts in the placenta (at protein level). Absorptive epithelia, including renal proximal tubules.

The protein resides in the apical cell membrane. The protein localises to the endosome lumen. It is found in the membrane. It localises to the coated pit. Its subcellular location is the cell projection. The protein resides in the dendrite. The protein localises to the axon. Its function is as follows. Multiligand endocytic receptor. Acts together with CUBN to mediate endocytosis of high-density lipoproteins. Mediates receptor-mediated uptake of polybasic drugs such as aprotinin, aminoglycosides and polymyxin B. In the kidney, mediates the tubular uptake and clearance of leptin. Also mediates transport of leptin across the blood-brain barrier through endocytosis at the choroid plexus epithelium. Endocytosis of leptin in neuronal cells is required for hypothalamic leptin signaling and leptin-mediated regulation of feeding and body weight. Mediates endocytosis and subsequent lysosomal degradation of CST3 in kidney proximal tubule cells. Mediates renal uptake of 25-hydroxyvitamin D3 in complex with the vitamin D3 transporter GC/DBP. Mediates renal uptake of metallothionein-bound heavy metals. Together with CUBN, mediates renal reabsorption of myoglobin. Mediates renal uptake and subsequent lysosomal degradation of APOM. Plays a role in kidney selenium homeostasis by mediating renal endocytosis of selenoprotein SEPP1. Mediates renal uptake of the antiapoptotic protein BIRC5/survivin which may be important for functional integrity of the kidney. Mediates renal uptake of matrix metalloproteinase MMP2 in complex with metalloproteinase inhibitor TIMP1. Mediates endocytosis of Sonic hedgehog protein N-product (ShhN), the active product of SHH. Also mediates ShhN transcytosis. In the embryonic neuroepithelium, mediates endocytic uptake and degradation of BMP4, is required for correct SHH localization in the ventral neural tube and plays a role in patterning of the ventral telencephalon. Required at the onset of neurulation to sequester SHH on the apical surface of neuroepithelial cells of the rostral diencephalon ventral midline and to control PTCH1-dependent uptake and intracellular trafficking of SHH. During neurulation, required in neuroepithelial cells for uptake of folate bound to the folate receptor FOLR1 which is necessary for neural tube closure. In the adult brain, negatively regulates BMP signaling in the subependymal zone which enables neurogenesis to proceed. In astrocytes, mediates endocytosis of ALB which is required for the synthesis of the neurotrophic factor oleic acid. Involved in neurite branching. During optic nerve development, required for SHH-mediated migration and proliferation of oligodendrocyte precursor cells. Mediates endocytic uptake and clearance of SHH in the retinal margin which protects retinal progenitor cells from mitogenic stimuli and keeps them quiescent. Plays a role in reproductive organ development by mediating uptake in reproductive tissues of androgen and estrogen bound to the sex hormone binding protein SHBG. Mediates endocytosis of angiotensin-2. Also mediates endocytosis of angiotensis 1-7. Binds to the complex composed of beta-amyloid protein 40 and CLU/APOJ and mediates its endocytosis and lysosomal degradation. Required for embryonic heart development. Required for normal hearing, possibly through interaction with estrogen in the inner ear. This chain is Low-density lipoprotein receptor-related protein 2, found in Homo sapiens (Human).